The chain runs to 987 residues: uncharacterized protein (987 aa).

2 consecutive transmembrane segments (helical) span residues 12-32 (FIYL…SVSG) and 958-978 (VENN…LGIL).

It to M.jannaschii MJ1393 and A.fulgidus AF2028.

Its subcellular location is the cell membrane. This is an uncharacterized protein from Methanocaldococcus jannaschii (strain ATCC 43067 / DSM 2661 / JAL-1 / JCM 10045 / NBRC 100440) (Methanococcus jannaschii).